The chain runs to 141 residues: Cystatin (141 aa).

The N-terminal stretch at 1-26 is a signal peptide; that stretch reads MVHSQLPVAAPLRLLCALLLLPSATM. The region spanning 29 to 129 is the Cystatin domain; that stretch reads GGLSPRSVTD…CHFQVWSRPW (101 aa). Positions 73-77 match the Secondary area of contact motif; that stretch reads QVVAG. Cystine bridges form between cysteine 91/cysteine 107 and cysteine 120/cysteine 140.

Belongs to the cystatin family. In terms of tissue distribution, expressed at a low level by the venom gland (at protein level).

It localises to the secreted. Inhibits various C1 cysteine proteases including cathepsin L, papain and cathepsin B. This protein has no toxic activity and its function in the venom is unknown. It may play a role as a housekeeping or regulatory protein. The sequence is that of Cystatin from Pseudonaja textilis (Eastern brown snake).